The following is a 642-amino-acid chain: Threonine--tRNA ligase (642 aa).

One can recognise a TGS domain in the interval 1–61 (MPVITLPDGS…ESDAQLAIIT (61 aa)). The segment at 243 to 534 (DHRKIGKQLD…LTEEYAGFYP (292 aa)) is catalytic. The Zn(2+) site is built by Cys-334, His-385, and His-511.

Belongs to the class-II aminoacyl-tRNA synthetase family. In terms of assembly, homodimer. It depends on Zn(2+) as a cofactor.

The protein localises to the cytoplasm. It catalyses the reaction tRNA(Thr) + L-threonine + ATP = L-threonyl-tRNA(Thr) + AMP + diphosphate + H(+). Functionally, catalyzes the attachment of threonine to tRNA(Thr) in a two-step reaction: L-threonine is first activated by ATP to form Thr-AMP and then transferred to the acceptor end of tRNA(Thr). Also edits incorrectly charged L-seryl-tRNA(Thr). This Serratia proteamaculans (strain 568) protein is Threonine--tRNA ligase.